The primary structure comprises 316 residues: Protein PXR1 (316 aa).

The G-patch domain maps to 25–71 (TSRFGHQYLERMGWKPGKGLGLVEHATTSHVKVSIKDDNLGLGSKLA). Residues 146–280 (GTTKKRKIDS…DSMLMPKEQL (135 aa)) form a disordered region. Residues 179 to 195 (DRKEKEEKKTEKENSEI) are compositionally biased toward basic and acidic residues. Over residues 196-209 (KKKKKEKKEKKEKK) the composition is skewed to basic residues. The span at 210–240 (EKKDKNEKKEKKDKNEKKEKKDKNEEKEKKE) shows a compositional bias: basic and acidic residues. Residues 241–260 (KKEKKEKKDKKDKKDKKDKK) are compositionally biased toward basic residues. The span at 261-270 (EKKEVKEVTR) shows a compositional bias: basic and acidic residues.

This sequence belongs to the PINX1 family.

Its subcellular location is the nucleus. It is found in the nucleolus. In terms of biological role, involved in rRNA-processing at A0, A1 and A2 sites and negatively regulates telomerase. This is Protein PXR1 (PXR1) from Debaryomyces hansenii (strain ATCC 36239 / CBS 767 / BCRC 21394 / JCM 1990 / NBRC 0083 / IGC 2968) (Yeast).